Reading from the N-terminus, the 112-residue chain is Colipase (112 aa).

Positions 1-17 are cleaved as a signal peptide; sequence MEKVLALLLVTLTVAYA. The propeptide at 18–22 is enterostatin, activation peptide; it reads VPDPR. Cystine bridges form between C34/C45, C40/C56, C44/C78, C66/C86, and C80/C104.

The protein belongs to the colipase family. In terms of assembly, forms a 1:1 stoichiometric complex with pancreatic lipase. Expressed by the pancreas.

It is found in the secreted. Its function is as follows. Colipase is a cofactor of pancreatic lipase. It allows the lipase to anchor itself to the lipid-water interface. Without colipase the enzyme is washed off by bile salts, which have an inhibitory effect on the lipase. Enterostatin has a biological activity as a satiety signal. The sequence is that of Colipase (CLPS) from Sus scrofa (Pig).